An 87-amino-acid polypeptide reads, in one-letter code: Protein Isd11 (87 aa).

The protein belongs to the complex I LYR family. As to quaternary structure, interacts with IscS; the interaction enhances cysteine desulfurase activity of IscS. Component of a complex, at least composed of IscS, Isd11 and IscU.

Its subcellular location is the mitochondrion. It participates in cofactor biosynthesis; iron-sulfur cluster biosynthesis. Its function is as follows. Participates in iron-sulfur cluster formation (ISC) pathway for iron-sulfur (Fe-S) cluster biogenesis. Enhances cysteine desulfurase activity of IscS. The protein is Protein Isd11 of Plasmodium falciparum (isolate 3D7).